The chain runs to 444 residues: Divalent metal cation transporter MntH (444 aa).

Helical transmembrane passes span leucine 39 to alanine 59, glycine 69 to leucine 89, phenylalanine 109 to threonine 128, leucine 146 to glutamate 166, leucine 175 to alanine 195, threonine 215 to leucine 235, valine 264 to serine 284, threonine 304 to isoleucine 324, isoleucine 346 to glycine 366, alanine 372 to isoleucine 392, and alanine 417 to isoleucine 437.

The protein belongs to the NRAMP family.

It localises to the cell inner membrane. Functionally, h(+)-stimulated, divalent metal cation uptake system. The sequence is that of Divalent metal cation transporter MntH from Granulibacter bethesdensis (strain ATCC BAA-1260 / CGDNIH1).